The primary structure comprises 431 residues: Glucose-1-phosphate adenylyltransferase (431 aa).

Alpha-D-glucose 1-phosphate contacts are provided by residues Y108, G174, 189-190 (EK), and S207.

This sequence belongs to the bacterial/plant glucose-1-phosphate adenylyltransferase family. Homotetramer.

The catalysed reaction is alpha-D-glucose 1-phosphate + ATP + H(+) = ADP-alpha-D-glucose + diphosphate. Its pathway is glycan biosynthesis; glycogen biosynthesis. Its function is as follows. Involved in the biosynthesis of ADP-glucose, a building block required for the elongation reactions to produce glycogen. Catalyzes the reaction between ATP and alpha-D-glucose 1-phosphate (G1P) to produce pyrophosphate and ADP-Glc. The polypeptide is Glucose-1-phosphate adenylyltransferase (Actinobacillus succinogenes (strain ATCC 55618 / DSM 22257 / CCUG 43843 / 130Z)).